The following is a 427-amino-acid chain: Peptidase B (427 aa).

Lysine 195 and aspartate 200 together coordinate Mn(2+). Lysine 207 is a catalytic residue. Positions 218, 277, and 279 each coordinate Mn(2+). Arginine 281 is a catalytic residue.

The protein belongs to the peptidase M17 family. Homohexamer. It depends on Mn(2+) as a cofactor.

Its subcellular location is the cytoplasm. It carries out the reaction Release of an N-terminal amino acid, Xaa, from a peptide or arylamide. Xaa is preferably Glu or Asp but may be other amino acids, including Leu, Met, His, Cys and Gln.. Functionally, probably plays an important role in intracellular peptide degradation. The sequence is that of Peptidase B from Salmonella choleraesuis (strain SC-B67).